Reading from the N-terminus, the 102-residue chain is uncharacterized protein (102 aa).

The disordered stretch occupies residues 1-41; it reads MAAPRQIAFYGKGGTGKPKRKPEPVTASKEDRCLGSPSKNK.

The protein to the N-terminal of nitrogenase iron protein (NifH). Has lost the ATP-binding site.

Its function is as follows. This protein is either not expressed, expressed at low levels or rapidly degraded. This is an uncharacterized protein from Rhizobium meliloti (Ensifer meliloti).